The chain runs to 592 residues: V-type ATP synthase alpha chain (592 aa).

232–239 serves as a coordination point for ATP; sequence GPFGSGKT.

It belongs to the ATPase alpha/beta chains family.

It catalyses the reaction ATP + H2O + 4 H(+)(in) = ADP + phosphate + 5 H(+)(out). In terms of biological role, produces ATP from ADP in the presence of a proton gradient across the membrane. The V-type alpha chain is a catalytic subunit. The protein is V-type ATP synthase alpha chain of Clostridioides difficile (strain 630) (Peptoclostridium difficile).